Here is a 947-residue protein sequence, read N- to C-terminus: Cell adhesion molecule CEACAM5 (947 aa).

The signal sequence occupies residues 1 to 34 (MEASSVLPCKWCTHLQGLLLTASFLTCCHLPTTA). Ig-like V-type domains lie at 35–132 (QITI…EIVS), 166–259 (SEGG…VQLY), 270–378 (PLQV…LHVN), 392–498 (RLSI…LQLD), 509–615 (QVKI…LHVN), 642–733 (GESV…VQLQ), and 746–851 (DQLI…VQVH). 13 N-linked (GlcNAc...) asparagine glycosylation sites follow: N57, N103, N110, N207, N224, N341, N461, N472, N578, N698, N709, N816, and N823. Positions 859-943 (PFVRVTDTTV…SKSSLPVRLA (85 aa)) constitute an Ig-like C2-type 1 domain. C878 and C926 are joined by a disulfide.

This sequence belongs to the immunoglobulin superfamily. CEA family. Homodimer.

The protein resides in the cell membrane. The protein localises to the apical cell membrane. Its subcellular location is the cell surface. Its function is as follows. Cell surface glycoprotein that plays a role in cell adhesion, intracellular signaling and tumor progression. Mediates homophilic and heterophilic cell adhesion with other carcinoembryonic antigen-related cell adhesion molecules, such as CEACAM6. Plays a role as an oncogene by promoting tumor progression; induces resistance to anoikis of colorectal carcinoma cells. The polypeptide is Cell adhesion molecule CEACAM5 (Mus musculus (Mouse)).